We begin with the raw amino-acid sequence, 275 residues long: Bis(5'-nucleosyl)-tetraphosphatase, symmetrical (275 aa).

This sequence belongs to the Ap4A hydrolase family.

The enzyme catalyses P(1),P(4)-bis(5'-adenosyl) tetraphosphate + H2O = 2 ADP + 2 H(+). In terms of biological role, hydrolyzes diadenosine 5',5'''-P1,P4-tetraphosphate to yield ADP. This chain is Bis(5'-nucleosyl)-tetraphosphatase, symmetrical (apaH), found in Pasteurella multocida (strain Pm70).